Consider the following 51-residue polypeptide: Large ribosomal subunit protein bL33 (51 aa).

It belongs to the bacterial ribosomal protein bL33 family.

This is Large ribosomal subunit protein bL33 from Colwellia psychrerythraea (strain 34H / ATCC BAA-681) (Vibrio psychroerythus).